Here is a 228-residue protein sequence, read N- to C-terminus: Triosephosphate isomerase (228 aa).

12 to 14 provides a ligand contact to substrate; that stretch reads NFK. His96 (electrophile) is an active-site residue. Glu144 functions as the Proton acceptor in the catalytic mechanism. Substrate-binding positions include Ile149, Gly184, and 205-206; that span reads AS.

The protein belongs to the triosephosphate isomerase family. Homotetramer; dimer of dimers.

The protein resides in the cytoplasm. The enzyme catalyses D-glyceraldehyde 3-phosphate = dihydroxyacetone phosphate. It functions in the pathway carbohydrate biosynthesis; gluconeogenesis. Its pathway is carbohydrate degradation; glycolysis; D-glyceraldehyde 3-phosphate from glycerone phosphate: step 1/1. Involved in the gluconeogenesis. Catalyzes stereospecifically the conversion of dihydroxyacetone phosphate (DHAP) to D-glyceraldehyde-3-phosphate (G3P). In Pyrococcus furiosus (strain ATCC 43587 / DSM 3638 / JCM 8422 / Vc1), this protein is Triosephosphate isomerase.